The primary structure comprises 206 residues: Urease accessory protein UreG (206 aa).

A GTP-binding site is contributed by 11–18; sequence GPVGSGKT.

It belongs to the SIMIBI class G3E GTPase family. UreG subfamily. Homodimer. UreD, UreF and UreG form a complex that acts as a GTP-hydrolysis-dependent molecular chaperone, activating the urease apoprotein by helping to assemble the nickel containing metallocenter of UreC. The UreE protein probably delivers the nickel.

It is found in the cytoplasm. Functionally, facilitates the functional incorporation of the urease nickel metallocenter. This process requires GTP hydrolysis, probably effectuated by UreG. The polypeptide is Urease accessory protein UreG (Mycolicibacterium gilvum (strain PYR-GCK) (Mycobacterium gilvum (strain PYR-GCK))).